A 128-amino-acid polypeptide reads, in one-letter code: MESKEERALNNLIVENVNQENDEKDEKEQVANKGEPLALPLNVSEYCVPRGNRRRFRVRQPILQYRWDIMHRLGEPQARMREENMERIGEEVRQLMEKLREKQLSHSLRAVSTDPPHHDHHDEFCLMP.

An Omega-N-methylarginine modification is found at arginine 50. Residues 107–128 (SLRAVSTDPPHHDHHDEFCLMP) form a disordered region. The span at 115 to 128 (PPHHDHHDEFCLMP) shows a compositional bias: basic and acidic residues. The his cluster stretch occupies residues 117–121 (HHDHH). Cysteine 125 is a Zn(2+) binding site.

Belongs to the BEX family. In terms of assembly, interacts with LMO2, possibly leading to regulate the transcriptional activity of a DNA-binding complex containing LMO2. Interacts with OMP. In terms of tissue distribution, expressed in central nervous system, with high level in pituitary, cerebellum and temporal lobe. Widely expressed in breast cancer cell lines.

The protein localises to the cytoplasm. It is found in the nucleus. In terms of biological role, regulator of mitochondrial apoptosis and G1 cell cycle in breast cancer. Protects the breast cancer cells against mitochondrial apoptosis and this effect is mediated through the modulation of BCL2 protein family, which involves the positive regulation of anti-apoptotic member BCL2 and the negative regulation of pro-apoptotic members BAD, BAK1 and PUMA. Required for the normal cell cycle progression during G1 in breast cancer cells through the regulation of CCND1 and CDKN1A. Regulates the level of PP2A regulatory subunit B and PP2A phosphatase activity. In absence of reductive stress, acts as a pseudosubstrate for the CRL2(FEM1B) complex: associates with FEM1B via zinc, thereby preventing association between FEM1B and its substrates. The polypeptide is Protein BEX2 (BEX2) (Homo sapiens (Human)).